We begin with the raw amino-acid sequence, 872 residues long: F-box protein pof6 (872 aa).

Residues 30 to 75 (FGCLTINIYLKIFTLISTPDLCNCRLVCRKFQQLCDYNSIYVKKLL) enclose the F-box domain. The segment at 101–122 (MSSNTSKGFHLQSSDKKYADSD) is disordered. Basic and acidic residues predominate over residues 113–122 (SSDKKYADSD).

In terms of assembly, interacts with skp1. Forms a complex with pof6 and skp1.

It localises to the cytoplasm. Its subcellular location is the nucleus. Functionally, together with skp1, essential for septum processing and cell separation. This is F-box protein pof6 (pof6) from Schizosaccharomyces pombe (strain 972 / ATCC 24843) (Fission yeast).